A 500-amino-acid polypeptide reads, in one-letter code: AMP phosphorylase (500 aa).

AMP contacts are provided by residues G166, 192–197 (SRAVTS), and T201. Catalysis depends on D254, which acts as the Proton donor. Residues S262 and K286 each coordinate AMP.

Belongs to the thymidine/pyrimidine-nucleoside phosphorylase family. Type 2 subfamily.

It catalyses the reaction AMP + phosphate = alpha-D-ribose 1,5-bisphosphate + adenine. It carries out the reaction CMP + phosphate = cytosine + alpha-D-ribose 1,5-bisphosphate. The catalysed reaction is UMP + phosphate = alpha-D-ribose 1,5-bisphosphate + uracil. Its function is as follows. Catalyzes the conversion of AMP and phosphate to adenine and ribose 1,5-bisphosphate (R15P). Exhibits phosphorylase activity toward CMP and UMP in addition to AMP. Functions in an archaeal AMP degradation pathway, together with R15P isomerase and RubisCO. The sequence is that of AMP phosphorylase (deoA) from Natronomonas pharaonis (strain ATCC 35678 / DSM 2160 / CIP 103997 / JCM 8858 / NBRC 14720 / NCIMB 2260 / Gabara) (Halobacterium pharaonis).